A 270-amino-acid chain; its full sequence is Putative phosphoenolpyruvate synthase regulatory protein (270 aa).

150–157 (GVSRCGKT) provides a ligand contact to ADP.

It belongs to the pyruvate, phosphate/water dikinase regulatory protein family. PSRP subfamily.

The catalysed reaction is [pyruvate, water dikinase] + ADP = [pyruvate, water dikinase]-phosphate + AMP + H(+). It catalyses the reaction [pyruvate, water dikinase]-phosphate + phosphate + H(+) = [pyruvate, water dikinase] + diphosphate. Its function is as follows. Bifunctional serine/threonine kinase and phosphorylase involved in the regulation of the phosphoenolpyruvate synthase (PEPS) by catalyzing its phosphorylation/dephosphorylation. This chain is Putative phosphoenolpyruvate synthase regulatory protein, found in Shewanella denitrificans (strain OS217 / ATCC BAA-1090 / DSM 15013).